Here is an 81-residue protein sequence, read N- to C-terminus: Large ribosomal subunit protein bL27 (81 aa).

The segment covering 1–11 (MATSKSGGSSK) has biased composition (polar residues). The interval 1–23 (MATSKSGGSSKNGRDSISKRLGV) is disordered.

It belongs to the bacterial ribosomal protein bL27 family.

The sequence is that of Large ribosomal subunit protein bL27 from Borrelia garinii subsp. bavariensis (strain ATCC BAA-2496 / DSM 23469 / PBi) (Borreliella bavariensis).